The primary structure comprises 250 residues: Carboxy-S-adenosyl-L-methionine synthase (250 aa).

S-adenosyl-L-methionine-binding positions include Tyr-45, 70–72 (GCS), 95–96 (DN), 123–124 (DI), Asn-138, and Arg-205.

This sequence belongs to the class I-like SAM-binding methyltransferase superfamily. Cx-SAM synthase family. In terms of assembly, homodimer.

The catalysed reaction is prephenate + S-adenosyl-L-methionine = carboxy-S-adenosyl-L-methionine + 3-phenylpyruvate + H2O. In terms of biological role, catalyzes the conversion of S-adenosyl-L-methionine (SAM) to carboxy-S-adenosyl-L-methionine (Cx-SAM). This is Carboxy-S-adenosyl-L-methionine synthase from Marinobacter nauticus (strain ATCC 700491 / DSM 11845 / VT8) (Marinobacter aquaeolei).